The primary structure comprises 372 residues: Anhydro-N-acetylmuramic acid kinase (372 aa).

18 to 25 lines the ATP pocket; it reads GTSLDGID.

This sequence belongs to the anhydro-N-acetylmuramic acid kinase family.

It catalyses the reaction 1,6-anhydro-N-acetyl-beta-muramate + ATP + H2O = N-acetyl-D-muramate 6-phosphate + ADP + H(+). Its pathway is amino-sugar metabolism; 1,6-anhydro-N-acetylmuramate degradation. It functions in the pathway cell wall biogenesis; peptidoglycan recycling. Catalyzes the specific phosphorylation of 1,6-anhydro-N-acetylmuramic acid (anhMurNAc) with the simultaneous cleavage of the 1,6-anhydro ring, generating MurNAc-6-P. Is required for the utilization of anhMurNAc either imported from the medium or derived from its own cell wall murein, and thus plays a role in cell wall recycling. The sequence is that of Anhydro-N-acetylmuramic acid kinase from Thiobacillus denitrificans (strain ATCC 25259 / T1).